The primary structure comprises 547 residues: MAAKEVKFGDSGRKKMLAGVNVLADAVKATLGPKGRNVIIEKSFGAPLITKDGVSVAKEIELKDRFENMGAQLVKDVASRANDDAGDGTTTATVLAQAIVNEGLKAVAAGMNPMDLKRGIDKATIAIVAELKKLSKPCTDTKAIAQVGTISANSDHSIGDIIAEAMEKVTKDGVITVEEGSGLENELSVVEGMQFDRGYLSPYFINKPDTMVAELDSPLLLLVDKKISNIREMLPVLEAVAKAGRPLLIVAEDVEGEALATLVVNNMRGIVKVAAVKAPGFGDRRKAMLQDIAVLTGGTVISEEVGLSLETTTLEHLGNAKRVILNKENTTIIDGAGVKTDIDSRISQIRQQIGDTSSDYDKEKLQERLAKLSGGVAVIKVGAGSEVEMKEKKARVEDALHATRAAVEEGVVPGGGVALVRSLQAIEGLKGDNADQDVGIALLRRAVEAPLRQIVANSGDEPSVVVDKVKQGSGNFGYNAASGEYGDMIEMGILDPAKVTRSALQAASSIASLMITTEAMIADVPEDKPAGGGMPDMGGMGGMGGMM.

ATP-binding positions include 30 to 33 (TLGP), Lys51, 87 to 91 (DGTTT), Gly415, 479 to 481 (NAA), and Asp495.

This sequence belongs to the chaperonin (HSP60) family. Forms a cylinder of 14 subunits composed of two heptameric rings stacked back-to-back. Interacts with the co-chaperonin GroES.

It is found in the cytoplasm. It catalyses the reaction ATP + H2O + a folded polypeptide = ADP + phosphate + an unfolded polypeptide.. Its function is as follows. Together with its co-chaperonin GroES, plays an essential role in assisting protein folding. The GroEL-GroES system forms a nano-cage that allows encapsulation of the non-native substrate proteins and provides a physical environment optimized to promote and accelerate protein folding. This chain is Chaperonin GroEL, found in Pseudomonas savastanoi pv. phaseolicola (strain 1448A / Race 6) (Pseudomonas syringae pv. phaseolicola (strain 1448A / Race 6)).